We begin with the raw amino-acid sequence, 393 residues long: Bone morphogenetic protein 15 (393 aa).

Residues 1-25 form the signal peptide; sequence MVLLSILRILLWGLVLFMEHRVQMT. The propeptide occupies 26–268; that stretch reads QVGQPSIAHL…DPSLLLRRAR (243 aa). N-linked (GlcNAc...) asparagine glycosylation is found at Asn-86 and Asn-237. Cystine bridges form between Cys-292–Cys-358, Cys-321–Cys-390, and Cys-325–Cys-392. A glycan (N-linked (GlcNAc...) asparagine) is linked at Asn-374.

It belongs to the TGF-beta family. In terms of assembly, homodimer. But, in contrast to other members of this family, cannot be disulfide-linked.

Its subcellular location is the secreted. Functionally, may be involved in follicular development. Oocyte-specific growth/differentiation factor that stimulates folliculogenesis and granulosa cell (GC) growth. The protein is Bone morphogenetic protein 15 (BMP15) of Ovis aries (Sheep).